The chain runs to 93 residues: RNA-binding protein Hfq (93 aa).

Residues 9 to 68 (DPFLNALRKERIPVSIFLVNGIKLQGQIESFDQYVVLLKNAVSQMVYKHAISTVVPARNP) form the Sm domain. The segment covering 74-86 (PAMAAGATAAPAA) has biased composition (low complexity). Positions 74–93 (PAMAAGATAAPAADEGYGNQ) are disordered.

Belongs to the Hfq family. In terms of assembly, homohexamer.

Its function is as follows. RNA chaperone that binds small regulatory RNA (sRNAs) and mRNAs to facilitate mRNA translational regulation in response to envelope stress, environmental stress and changes in metabolite concentrations. Also binds with high specificity to tRNAs. This is RNA-binding protein Hfq from Alcanivorax borkumensis (strain ATCC 700651 / DSM 11573 / NCIMB 13689 / SK2).